Here is a 383-residue protein sequence, read N- to C-terminus: 8-amino-7-oxononanoate synthase (383 aa).

Arg22 lines the substrate pocket. A pyridoxal 5'-phosphate-binding site is contributed by 109 to 110 (GF). A substrate-binding site is contributed by His134. The pyridoxal 5'-phosphate site is built by Ser178, His206, and Thr232. An N6-(pyridoxal phosphate)lysine modification is found at Lys235. Thr348 contributes to the substrate binding site.

The protein belongs to the class-II pyridoxal-phosphate-dependent aminotransferase family. BioF subfamily. As to quaternary structure, homodimer. Pyridoxal 5'-phosphate is required as a cofactor.

It catalyses the reaction 6-carboxyhexanoyl-[ACP] + L-alanine + H(+) = (8S)-8-amino-7-oxononanoate + holo-[ACP] + CO2. It functions in the pathway cofactor biosynthesis; biotin biosynthesis. Its function is as follows. Catalyzes the decarboxylative condensation of pimeloyl-[acyl-carrier protein] and L-alanine to produce 8-amino-7-oxononanoate (AON), [acyl-carrier protein], and carbon dioxide. The polypeptide is 8-amino-7-oxononanoate synthase (Vibrio parahaemolyticus serotype O3:K6 (strain RIMD 2210633)).